Reading from the N-terminus, the 212-residue chain is Uracil phosphoribosyltransferase (212 aa).

5-phospho-alpha-D-ribose 1-diphosphate is bound by residues Arg-78, Arg-103, and 130–138 (DPMLATGSS). Uracil contacts are provided by residues Ile-193 and 198–200 (GDA). Asp-199 is a 5-phospho-alpha-D-ribose 1-diphosphate binding site.

The protein belongs to the UPRTase family. The cofactor is Mg(2+).

The enzyme catalyses UMP + diphosphate = 5-phospho-alpha-D-ribose 1-diphosphate + uracil. It participates in pyrimidine metabolism; UMP biosynthesis via salvage pathway; UMP from uracil: step 1/1. Allosterically activated by GTP. Its function is as follows. Catalyzes the conversion of uracil and 5-phospho-alpha-D-ribose 1-diphosphate (PRPP) to UMP and diphosphate. The polypeptide is Uracil phosphoribosyltransferase (Pseudomonas fluorescens (strain ATCC BAA-477 / NRRL B-23932 / Pf-5)).